The primary structure comprises 798 residues: Protocadherin beta-13 (798 aa).

An N-terminal signal peptide occupies residues 1–28; sequence MEASGKLICRQRQVLFSFLLLGLSLAGA. Over 29–690 the chain is Extracellular; that stretch reads AEPRSYSVVE…AQADLLTVYL (662 aa). 5 consecutive Cadherin domains span residues 36–134, 139–243, 248–348, 353–451, and 456–561; these read VVEE…SPVF, MLVK…APEF, YRVQ…APEV, FTSP…APAF, and YTLF…SPFV. 2 N-linked (GlcNAc...) asparagine glycosylation sites follow: N418 and N436. N567 carries N-linked (GlcNAc...) asparagine glycosylation. A Cadherin 6 domain is found at 568 to 671; the sequence is GSAPCTELVP…LVDGFSQPYL (104 aa). A helical membrane pass occupies residues 691–711; sequence VVALASVSSLFLFSVLLFVAV. The Cytoplasmic portion of the chain corresponds to 712 to 798; the sequence is RLCRRSRAAS…FPNNFGFNIQ (87 aa).

Its subcellular location is the cell membrane. Functionally, potential calcium-dependent cell-adhesion protein. May be involved in the establishment and maintenance of specific neuronal connections in the brain. The sequence is that of Protocadherin beta-13 (PCDHB13) from Homo sapiens (Human).